Here is a 273-residue protein sequence, read N- to C-terminus: Dermonecrotic toxin LdSicTox-alphaIB1bii (273 aa).

His-5 is a catalytic residue. Glu-25 and Asp-27 together coordinate Mg(2+). His-41 (nucleophile) is an active-site residue. 2 cysteine pairs are disulfide-bonded: Cys-45-Cys-51 and Cys-47-Cys-190. Residue Asp-85 participates in Mg(2+) binding. N-linked (GlcNAc...) asparagine glycosylation is present at Asn-250.

It belongs to the arthropod phospholipase D family. Class II subfamily. Mg(2+) serves as cofactor. As to expression, expressed by the venom gland.

The protein localises to the secreted. It catalyses the reaction an N-(acyl)-sphingosylphosphocholine = an N-(acyl)-sphingosyl-1,3-cyclic phosphate + choline. The enzyme catalyses an N-(acyl)-sphingosylphosphoethanolamine = an N-(acyl)-sphingosyl-1,3-cyclic phosphate + ethanolamine. It carries out the reaction a 1-acyl-sn-glycero-3-phosphocholine = a 1-acyl-sn-glycero-2,3-cyclic phosphate + choline. The catalysed reaction is a 1-acyl-sn-glycero-3-phosphoethanolamine = a 1-acyl-sn-glycero-2,3-cyclic phosphate + ethanolamine. Its function is as follows. Dermonecrotic toxins cleave the phosphodiester linkage between the phosphate and headgroup of certain phospholipids (sphingolipid and lysolipid substrates), forming an alcohol (often choline) and a cyclic phosphate. This toxin acts on sphingomyelin (SM). It may also act on ceramide phosphoethanolamine (CPE), lysophosphatidylcholine (LPC) and lysophosphatidylethanolamine (LPE), but not on lysophosphatidylserine (LPS), and lysophosphatidylglycerol (LPG). It acts by transphosphatidylation, releasing exclusively cyclic phosphate products as second products. Induces dermonecrosis, hemolysis, increased vascular permeability, edema, inflammatory response, and platelet aggregation. This Loxosceles deserta (Desert recluse spider) protein is Dermonecrotic toxin LdSicTox-alphaIB1bii.